We begin with the raw amino-acid sequence, 51 residues long: UPF0391 membrane protein PsycPRwf_2202 (51 aa).

2 consecutive transmembrane segments (helical) span residues 6 to 26 and 27 to 47; these read IIFAVIALLASLLGFGGVAGL and SQNFAYIFLVVAVILFIIGFI.

Belongs to the UPF0391 family.

Its subcellular location is the cell membrane. This Psychrobacter sp. (strain PRwf-1) protein is UPF0391 membrane protein PsycPRwf_2202.